Consider the following 331-residue polypeptide: NADH-quinone oxidoreductase subunit H (331 aa).

A run of 8 helical transmembrane segments spans residues 7–27 (ALVTIILTVVKAIVVLLAVVI), 81–101 (MIFTLAPVIAMGALLVAFAIV), 114–134 (IGILFFFAMAGLTVYAVLFAG), 154–174 (ISYEVFLALSLMGIVAQVGSF), 187–207 (VWFIIPQFFGFCTFIIAGVAV), 238–258 (FFVGEYIGIVLVSALLATLFF), 271–291 (WLSFFYFAAKTGFFIMLFILI), and 310–330 (VCLPLTLINLLVTGALVLAAA).

Belongs to the complex I subunit 1 family. NDH-1 is composed of 13 different subunits. Subunits NuoA, H, J, K, L, M, N constitute the membrane sector of the complex.

It is found in the cell inner membrane. It catalyses the reaction a quinone + NADH + 5 H(+)(in) = a quinol + NAD(+) + 4 H(+)(out). NDH-1 shuttles electrons from NADH, via FMN and iron-sulfur (Fe-S) centers, to quinones in the respiratory chain. The immediate electron acceptor for the enzyme in this species is believed to be ubiquinone. Couples the redox reaction to proton translocation (for every two electrons transferred, four hydrogen ions are translocated across the cytoplasmic membrane), and thus conserves the redox energy in a proton gradient. This subunit may bind ubiquinone. The chain is NADH-quinone oxidoreductase subunit H from Pseudomonas paraeruginosa (strain DSM 24068 / PA7) (Pseudomonas aeruginosa (strain PA7)).